The sequence spans 384 residues: 3,7-dimethylxanthine N-methyltransferase 2 (384 aa).

8 residues coordinate S-adenosyl-L-homocysteine: Tyr-18, Cys-61, Asn-66, Asp-100, Leu-101, Ser-139, Phe-140, and Cys-156. Tyr-157 is a binding site for theobromine. An S-adenosyl-L-homocysteine-binding site is contributed by Cys-158. Residues His-160 and Trp-161 each contribute to the theobromine site. Asn-178 provides a ligand contact to Mg(2+). Ser-237 lines the theobromine pocket. Positions 260, 262, and 263 each coordinate Mg(2+). Tyr-368 provides a ligand contact to theobromine.

Belongs to the methyltransferase superfamily. Type-7 methyltransferase family. It depends on Mg(2+) as a cofactor. Highly expressed in developing endosperm. Detected in young leaves and flower buds. Present in immature fruits (grains), but barely in mature fruits.

It carries out the reaction 7-methylxanthine + S-adenosyl-L-methionine = theobromine + S-adenosyl-L-homocysteine + H(+). It catalyses the reaction theobromine + S-adenosyl-L-methionine = caffeine + S-adenosyl-L-homocysteine + H(+). The enzyme catalyses 1,7-dimethylxanthine + S-adenosyl-L-methionine = caffeine + S-adenosyl-L-homocysteine + H(+). It participates in alkaloid biosynthesis. In terms of biological role, involved in the biosynthesis of caffeine. Catalyzes the conversion of 7-methylxanthine (7mX) to theobromine and of theobromine to caffeine. Has 1-N-methylation activity. This chain is 3,7-dimethylxanthine N-methyltransferase 2, found in Coffea arabica (Arabian coffee).